The following is a 738-amino-acid chain: uncharacterized protein (738 aa).

Residues 1-27 (MKKLLTSLMLSTASFMLLLTVSNKAYA) form the signal peptide. The next 2 membrane-spanning stretches (helical) occupy residues 612-632 (TFHT…ILNS) and 712-732 (ITYA…TVTI).

Its subcellular location is the membrane. This is an uncharacterized protein from Mycoplasma (Bacteriophage L2).